The sequence spans 253 residues: 1-(5-phosphoribosyl)-5-[(5-phosphoribosylamino)methylideneamino] imidazole-4-carboxamide isomerase (253 aa).

Asp19 (proton acceptor) is an active-site residue. The Proton donor role is filled by Asp141.

Belongs to the HisA/HisF family.

Its subcellular location is the cytoplasm. It catalyses the reaction 1-(5-phospho-beta-D-ribosyl)-5-[(5-phospho-beta-D-ribosylamino)methylideneamino]imidazole-4-carboxamide = 5-[(5-phospho-1-deoxy-D-ribulos-1-ylimino)methylamino]-1-(5-phospho-beta-D-ribosyl)imidazole-4-carboxamide. It participates in amino-acid biosynthesis; L-histidine biosynthesis; L-histidine from 5-phospho-alpha-D-ribose 1-diphosphate: step 4/9. This is 1-(5-phosphoribosyl)-5-[(5-phosphoribosylamino)methylideneamino] imidazole-4-carboxamide isomerase from Rhodopirellula baltica (strain DSM 10527 / NCIMB 13988 / SH1).